A 344-amino-acid chain; its full sequence is L-rhamnose-proton symporter (344 aa).

The next 10 membrane-spanning stretches (helical) occupy residues 4–24, 38–58, 68–88, 101–121, 137–157, 175–195, 207–227, 255–275, 290–310, and 324–344; these read PILL…CFYA, WSLG…WWLL, FDMA…IGNI, MGIG…TPVL, TLLG…AGLL, LILA…MDAA, INAL…GAVV, LIAN…QFFF, ISWM…GLLF, and LVLG…GMAA.

This sequence belongs to the L-rhamnose transporter (TC 2.A.7.6) family.

Its subcellular location is the cell inner membrane. It catalyses the reaction L-rhamnopyranose(in) + H(+)(in) = L-rhamnopyranose(out) + H(+)(out). In terms of biological role, uptake of L-rhamnose across the cytoplasmic membrane with the concomitant transport of protons into the cell (symport system). The chain is L-rhamnose-proton symporter from Pectobacterium carotovorum subsp. carotovorum (strain PC1).